Consider the following 155-residue polypeptide: Small ribosomal subunit protein uS7cz/uS7cy (155 aa).

This sequence belongs to the universal ribosomal protein uS7 family. Part of the 30S ribosomal subunit.

The protein localises to the plastid. It is found in the chloroplast. Its function is as follows. One of the primary rRNA binding proteins, it binds directly to 16S rRNA where it nucleates assembly of the head domain of the 30S subunit. In Oenothera argillicola (Appalachian evening primrose), this protein is Small ribosomal subunit protein uS7cz/uS7cy (rps7-A).